The sequence spans 513 residues: GMP synthase [glutamine-hydrolyzing] (513 aa).

Positions T7–E197 constitute a Glutamine amidotransferase type-1 domain. Catalysis depends on C84, which acts as the Nucleophile. Catalysis depends on residues H171 and E173. A GMPS ATP-PPase domain is found at W198–R387. Position 225–231 (S225–S231) interacts with ATP.

As to quaternary structure, homodimer.

The catalysed reaction is XMP + L-glutamine + ATP + H2O = GMP + L-glutamate + AMP + diphosphate + 2 H(+). It functions in the pathway purine metabolism; GMP biosynthesis; GMP from XMP (L-Gln route): step 1/1. Catalyzes the synthesis of GMP from XMP. The polypeptide is GMP synthase [glutamine-hydrolyzing] (Heliobacterium modesticaldum (strain ATCC 51547 / Ice1)).